The following is a 446-amino-acid chain: Deoxyguanosinetriphosphate triphosphohydrolase-like protein (446 aa).

The tract at residues 1-28 (MSSSVWQERRHGEDKQRRNDHRSPFQRD) is disordered. Over residues 7 to 28 (QERRHGEDKQRRNDHRSPFQRD) the composition is skewed to basic and acidic residues. Residues 59-252 (RLTHSLEVSQ…MELADDIAYA (194 aa)) form the HD domain.

The protein belongs to the dGTPase family. Type 2 subfamily.

The protein is Deoxyguanosinetriphosphate triphosphohydrolase-like protein of Shewanella sp. (strain MR-4).